We begin with the raw amino-acid sequence, 346 residues long: Zinc finger CCCH domain-containing protein 28 (346 aa).

The tract at residues 1 to 99 (MASAETPNPD…SPRYPDGKRR (99 aa)) is disordered. Positions 17 to 41 (DAAAAADPAAAAPAAAATDPAAAGS) are enriched in low complexity. A compositionally biased stretch (basic residues) spans 62–86 (RSSRSRSRSPRRGRSRSRSRSRSRG). 6 consecutive C3H1-type zinc fingers follow at residues 103–131 (DLNV…HPHP), 138–165 (DSKV…HPPP), 181–209 (KVKM…HHSP), 211–237 (EDCA…HVMA), 282–308 (NYGV…HPDL), and 314–340 (NTQV…HPPA).

The chain is Zinc finger CCCH domain-containing protein 28 from Oryza sativa subsp. japonica (Rice).